We begin with the raw amino-acid sequence, 378 residues long: Probable endopolygalacturonase NFIA_008150 (378 aa).

The first 19 residues, Met-1–Ala-19, serve as a signal peptide directing secretion. The propeptide occupies Ser-20 to Arg-35. An intrachain disulfide couples Cys-38 to Cys-56. 3 PbH1 repeats span residues Thr-147–Gly-169, Cys-170–Ser-200, and Ser-201–Ser-222. Residue Asp-215 is the Proton donor of the active site. The cysteines at positions 217 and 233 are disulfide-linked. His-237 is a catalytic residue. PbH1 repeat units lie at residues Arg-247–Ala-273 and Ile-281–Gln-303. Asn-254 carries an N-linked (GlcNAc...) asparagine glycan. N-linked (GlcNAc...) asparagine glycosylation occurs at Asn-327. 2 cysteine pairs are disulfide-bonded: Cys-345/Cys-350 and Cys-369/Cys-378.

This sequence belongs to the glycosyl hydrolase 28 family.

The protein resides in the secreted. The enzyme catalyses (1,4-alpha-D-galacturonosyl)n+m + H2O = (1,4-alpha-D-galacturonosyl)n + (1,4-alpha-D-galacturonosyl)m.. In terms of biological role, involved in maceration and soft-rotting of plant tissue. Hydrolyzes the 1,4-alpha glycosidic bonds of de-esterified pectate in the smooth region of the plant cell wall. The chain is Probable endopolygalacturonase NFIA_008150 from Neosartorya fischeri (strain ATCC 1020 / DSM 3700 / CBS 544.65 / FGSC A1164 / JCM 1740 / NRRL 181 / WB 181) (Aspergillus fischerianus).